A 196-amino-acid polypeptide reads, in one-letter code: Putative 3-methyladenine DNA glycosylase (196 aa).

Belongs to the DNA glycosylase MPG family.

This Chlorobium luteolum (strain DSM 273 / BCRC 81028 / 2530) (Pelodictyon luteolum) protein is Putative 3-methyladenine DNA glycosylase.